The following is a 730-amino-acid chain: Tubulin polyglutamylase ttll-5 (730 aa).

Positions 120-478 constitute a TTL domain; the sequence is RLRLTFKMMR…PLLDRKIIDS (359 aa). ATP is bound by residues 278 to 281, lysine 291, and aspartate 293; that span reads SRYL. The interval 594–618 is disordered; the sequence is KKNTKNSSGSSKASSSSASASSSSS. Low complexity predominate over residues 600 to 618; that stretch reads SSGSSKASSSSASASSSSS.

Belongs to the tubulin--tyrosine ligase family. As to expression, expressed in body wall muscles. Not expressed in sensory neurons.

The enzyme catalyses L-glutamyl-[protein] + L-glutamate + ATP = gamma-L-glutamyl-L-glutamyl-[protein] + ADP + phosphate + H(+). In terms of biological role, polyglutamylase which preferentially modifies alpha-tubulin. Involved in the side-chain initiation step of the polyglutamylation reaction rather than in the elongation step. Together with ttll-4 and ttll-11, required for male mating. Probably by regulating microtubule stability via the glutamylation of tubulin, negatively regulates axon regrowth after injury in PLM neurons. The chain is Tubulin polyglutamylase ttll-5 from Caenorhabditis elegans.